The chain runs to 223 residues: Ubiquitin carboxyl-terminal hydrolase isozyme L1 (223 aa).

Methionine 1 is modified (N-acetylmethionine). Positions 2-221 constitute a UCH catalytic domain; that stretch reads QLKPMEINPE…VRFSAVALCK (220 aa). Residues 5-10 are interaction with ubiquitin; sequence PMEINP. Cysteine 90 acts as the Nucleophile in catalysis. A Phosphoserine modification is found at serine 125. Histidine 161 acts as the Proton donor in catalysis. An interaction with ubiquitin region spans residues 211–216; that stretch reads EVRFSA. Cysteine 220 carries S-farnesyl cysteine lipidation. Residues 221-223 constitute a propeptide, removed in mature form; sequence KCA.

This sequence belongs to the peptidase C12 family. Monomer. Homodimer. Interacts with COPS5 and SNCA. In terms of processing, O-glycosylated.

The protein resides in the cytoplasm. Its subcellular location is the endoplasmic reticulum membrane. It carries out the reaction Thiol-dependent hydrolysis of ester, thioester, amide, peptide and isopeptide bonds formed by the C-terminal Gly of ubiquitin (a 76-residue protein attached to proteins as an intracellular targeting signal).. Ubiquitin-protein hydrolase involved both in the processing of ubiquitin precursors and of ubiquitinated proteins. This enzyme is a thiol protease that recognizes and hydrolyzes a peptide bond at the C-terminal glycine of ubiquitin. Also binds to free monoubiquitin and may prevent its degradation in lysosomes. The homodimer may have ATP-independent ubiquitin ligase activity. This chain is Ubiquitin carboxyl-terminal hydrolase isozyme L1 (UCHL1), found in Monodelphis domestica (Gray short-tailed opossum).